The sequence spans 367 residues: Indole glucosinolate O-methyltransferase 5 (367 aa).

Residues G209, D232, D252, M253, and K266 each coordinate S-adenosyl-L-homocysteine. The Proton acceptor role is filled by H270.

This sequence belongs to the class I-like SAM-binding methyltransferase superfamily. Cation-independent O-methyltransferase family.

Its pathway is secondary metabolite biosynthesis. In terms of biological role, involved in indole glucosinolate biosynthesis. Catalyzes methoxylation reactions of the glucosinolate indole ring. Converts the hydroxy intermediates 4-hydroxy-indol-3-yl-methylglucosinolate (4OH-I3M) and 1-hydroxy-indol-3-yl-methylglucosinolate (1OH-I3M) to 4-methoxy-indol-3-yl-methylglucosinolate (4MO-I3M) and 1-methoxy-indol-3-yl-methylglucosinolate, respectively. This Arabidopsis thaliana (Mouse-ear cress) protein is Indole glucosinolate O-methyltransferase 5.